The sequence spans 435 residues: Casein kinase 1-like protein 12 (435 aa).

The Protein kinase domain maps to 9 to 278 (YRLGRKIGSG…LKRIFRDLFI (270 aa)). Residues 15-23 (IGSGSFGEI) and Lys38 contribute to the ATP site. The active-site Proton acceptor is the Asp128. Disordered regions lie at residues 313 to 363 (VGTS…RGPM) and 394 to 414 (LRNSPVVTTPEGKRSSSTRKH).

It belongs to the protein kinase superfamily. CK1 Ser/Thr protein kinase family. Casein kinase I subfamily. As to quaternary structure, monomer. Post-translationally, autophosphorylated.

The protein localises to the cytoplasm. The catalysed reaction is L-seryl-[protein] + ATP = O-phospho-L-seryl-[protein] + ADP + H(+). It catalyses the reaction L-threonyl-[protein] + ATP = O-phospho-L-threonyl-[protein] + ADP + H(+). Functionally, casein kinases are operationally defined by their preferential utilization of acidic proteins such as caseins as substrates. It can phosphorylate a large number of proteins. The chain is Casein kinase 1-like protein 12 from Arabidopsis thaliana (Mouse-ear cress).